The following is a 790-amino-acid chain: MFTLLRCLGFGVNEPTNTSSSEYVPEYSVEEISNEVAELDSVDPLFQCYKHVFVSLMLVRKMTQAAEDFLESFGGEFDSPCCRVYRLYRHFVNEDDAPAWAIPNVVNEDSYDDYAYLREELDAIDSSFELLNEERELSEITDRLNALRFFPVSKTEALPVANVQEVKLISETYQLLMTFINYSDENIPSEMPAPLLDELGMLPEELGPLNEIEDIKPVAAPITLLSEFRASDNAKPLDIVEIIPDVSPTKPYEAVISGNDWMTLGRIIPTTPVPTIRDVFFSGLSRHGSPEVIQNALDEFLPLHHSIDDKYFQEWVETSDKSLDVDPCRIDLSVFNNWQSSENCYEPRFKTGALSTRKGTQTEALLAIKKRNMNVPNLGQIYDVNSVANSVVNKLLTTVIDPDKLCMFPDFISEGEVSYFQDYIVGKNPDPELYSDPLGVRSIDSYKHMIKSVLKPVEDNSLHLERPMPATITYHDKDIVMSSSPIFLAAAARLMLILRDKITIPSGKFHQLFSIDAEAFDASFHFKEIDFSKFDKSQNELHHLIQERFLKYLGIPNEFLTLWFNAHRKSRISDSKNGVFFNVDFQRRTGDALTYLGNTIVTLACLCHVYDLMDPNVKFVVASGDDSLIGTVEELPRDQEFLFTTLFNLEAKFPHNQPFICSKFLITMPTTSGGKVVLPIPNPLKLLIRLGSKKVNADIFDEWYQSWIDIIGGFNDHHVIRCVAAMTAHRYLRRPSLYLEAALESLGKIFAGKTLCKECLFNEKHESNVKIKPRRVKKSHSDARSRARRA.

A RdRp catalytic domain is found at 524-639 (FHFKEIDFSK…GTVEELPRDQ (116 aa)). Residues 771–790 (IKPRRVKKSHSDARSRARRA) are disordered. Over residues 779 to 790 (SHSDARSRARRA) the composition is skewed to basic and acidic residues.

The protein belongs to the bromoviridae 2a family. In terms of assembly, interacts with replication protein 1a.

It catalyses the reaction RNA(n) + a ribonucleoside 5'-triphosphate = RNA(n+1) + diphosphate. Functionally, RNA-dependent RNA polymerase which replicates the viral genome composed of 3 RNA segments, RNA1, RNA2 and RNA3. This is RNA-directed RNA polymerase 2a from Alfalfa mosaic virus (AMV).